The sequence spans 284 residues: Nucleotide-binding protein VSAL_I0495 (284 aa).

ATP is bound at residue 8–15 (GNSGAGKS). Position 56–59 (56–59 (DIRN)) interacts with GTP.

It belongs to the RapZ-like family.

Functionally, displays ATPase and GTPase activities. In Aliivibrio salmonicida (strain LFI1238) (Vibrio salmonicida (strain LFI1238)), this protein is Nucleotide-binding protein VSAL_I0495.